The sequence spans 206 residues: Small ribosomal subunit protein uS4 (206 aa).

The S4 RNA-binding domain occupies 96–158 (GRLDNVVYRM…AKQQSRIKAA (63 aa)).

Belongs to the universal ribosomal protein uS4 family. As to quaternary structure, part of the 30S ribosomal subunit. Contacts protein S5. The interaction surface between S4 and S5 is involved in control of translational fidelity.

In terms of biological role, one of the primary rRNA binding proteins, it binds directly to 16S rRNA where it nucleates assembly of the body of the 30S subunit. Functionally, with S5 and S12 plays an important role in translational accuracy. This Vibrio atlanticus (strain LGP32) (Vibrio splendidus (strain Mel32)) protein is Small ribosomal subunit protein uS4.